A 599-amino-acid chain; its full sequence is MRTHYCGQVTAADLDQTVTLCGWVHRRRDHGGVIFIDLRDREGLVQVVCDPDRAETFHTAESIRNEFVIELTGKVRRRPAGTENPNLVSGEIEVLCHTLEVLNASATPPFQLDDDNLSENVRLTHRVIDLRRPQMQKNLMLRYKVAMAFRRFLDAQGFIDVETPMLTKSTPEGARDYLVPSRVHPGQFFALPQSPQLFKQLLMVAGFDRYYQITKCFRDEDLRADRQPEFTQVDIETSFLDEAEITAIMEDMIRYVFREALAVELPNPFPRMTHAEAMRRYGSDKPDLRVTLELTDVTDAVQDVAFKVFSGPATSGGRVAALRVPGGASLTRGEIDEYTKFVGIYGARGLAYIKVNDVTKPNDEGLQSPIVKNLHEEALRTILERTGAESGDLIFFGADKTKVVNDALGALRTKLGHEKGYVSGAAWTPVWVVDFPMFEYDDESKRWVACHHPFTAPKDEHVELLESAPGECLAKAYDLALNGWEIGGGSVRIHRADMQSKVFRALNIGDEEAQLKFGFLLDALKYGAPPHGGLAFGLDRVVTLMTGAESIRDVIAFPKTQRAQCLLTDAPGEVDDKQLRELHIRLRQKIETQVEVAKA.

Glu172 contacts L-aspartate. The interval 196–199 is aspartate; sequence QLFK. Arg218 serves as a coordination point for L-aspartate. ATP is bound by residues 218–220 and Gln227; that span reads RDE. His451 contacts L-aspartate. Position 485 (Glu485) interacts with ATP. Arg492 contacts L-aspartate. Position 537–540 (537–540) interacts with ATP; it reads GLDR.

Belongs to the class-II aminoacyl-tRNA synthetase family. Type 1 subfamily. As to quaternary structure, homodimer.

It is found in the cytoplasm. The enzyme catalyses tRNA(Asx) + L-aspartate + ATP = L-aspartyl-tRNA(Asx) + AMP + diphosphate. Aspartyl-tRNA synthetase with relaxed tRNA specificity since it is able to aspartylate not only its cognate tRNA(Asp) but also tRNA(Asn). Reaction proceeds in two steps: L-aspartate is first activated by ATP to form Asp-AMP and then transferred to the acceptor end of tRNA(Asp/Asn). The sequence is that of Aspartate--tRNA(Asp/Asn) ligase from Aromatoleum aromaticum (strain DSM 19018 / LMG 30748 / EbN1) (Azoarcus sp. (strain EbN1)).